The following is a 195-amino-acid chain: BH3-interacting domain death agonist (195 aa).

Met-1 bears the N-acetylmethionine mark. The span at 58 to 69 (TDGSQASRSFNQ) shows a compositional bias: polar residues. The interval 58–77 (TDGSQASRSFNQGRIEPDSE) is disordered. Ser-78 carries the phosphoserine modification. The BH3 motif lies at 87–100 (ARHLAQIGDEMDHN).

As to quaternary structure, forms heterodimers either with the pro-apoptotic protein BAX or the anti-apoptotic protein BCL2. Interacts with PLEKHN1. In terms of assembly, interacts with ITCH. Interacts with MTCH2. Post-translationally, TNF-alpha induces caspase-mediated cleavage into a major p15 and minor p13 and p11 products. Cleaved by CASP6 into a major p15 and minor p13 products, leading to release of cytochrome c and subsequent nonalcoholic steatohepatitis. In terms of processing, ubiquitinated by ITCH; ubiquitination results in proteasome-dependent degradation.

The protein localises to the cytoplasm. It is found in the mitochondrion membrane. It localises to the mitochondrion outer membrane. Its function is as follows. Induces caspases and apoptosis. Counters the protective effect of BCL2. Induces caspase activation and apoptosis. Allows the release of cytochrome c. This chain is BH3-interacting domain death agonist (Bid), found in Mus musculus (Mouse).